The sequence spans 219 residues: MKKKTGGMRIFKVFGLFLFSLIFFGLLSLATFPKFLLFDRLLIQNKIFLIAQKVKENSMSIELFKGKVYFQNREALEFDYTKLSLGFLSVNGKILCRGKISEISYSFLGSIETKFRDFSCTPFVKKVNGRIELSDGIYGRVKLEGFKTELALLDEINLNFKGQTFTGSVKYLGMELKGQGRITLNRKNFLMSKVDGEFKGNGVRIKVQGTLNNLRVYMK.

Residues 13–32 (VFGLFLFSLIFFGLLSLATF) form a helical membrane-spanning segment.

The protein localises to the membrane. This is an uncharacterized protein from Aquifex aeolicus (strain VF5).